The primary structure comprises 189 residues: Pyridoxal 5'-phosphate synthase subunit PdxT (189 aa).

Residue 47–49 participates in L-glutamine binding; the sequence is GES. The active-site Nucleophile is Cys-79. L-glutamine is bound by residues Arg-106 and 135 to 136; that span reads IR. Residues His-171 and Glu-173 each act as charge relay system in the active site.

The protein belongs to the glutaminase PdxT/SNO family. In the presence of PdxS, forms a dodecamer of heterodimers. Only shows activity in the heterodimer.

It carries out the reaction aldehydo-D-ribose 5-phosphate + D-glyceraldehyde 3-phosphate + L-glutamine = pyridoxal 5'-phosphate + L-glutamate + phosphate + 3 H2O + H(+). It catalyses the reaction L-glutamine + H2O = L-glutamate + NH4(+). It functions in the pathway cofactor biosynthesis; pyridoxal 5'-phosphate biosynthesis. Functionally, catalyzes the hydrolysis of glutamine to glutamate and ammonia as part of the biosynthesis of pyridoxal 5'-phosphate. The resulting ammonia molecule is channeled to the active site of PdxS. This is Pyridoxal 5'-phosphate synthase subunit PdxT from Desulforudis audaxviator (strain MP104C).